The primary structure comprises 259 residues: Proteasome subunit alpha (259 aa).

The disordered stretch occupies residues 226–259 (LAEGSATSATSATPGEAEAPATAPEGDVDTGSNG). Positions 227–250 (AEGSATSATSATPGEAEAPATAPE) are enriched in low complexity.

It belongs to the peptidase T1A family. As to quaternary structure, the 20S proteasome core is composed of 14 alpha and 14 beta subunits that assemble into four stacked heptameric rings, resulting in a barrel-shaped structure. The two inner rings, each composed of seven catalytic beta subunits, are sandwiched by two outer rings, each composed of seven alpha subunits. The catalytic chamber with the active sites is on the inside of the barrel. Has a gated structure, the ends of the cylinder being occluded by the N-termini of the alpha-subunits. Is capped by the proteasome-associated ATPase, ARC.

It localises to the cytoplasm. It functions in the pathway protein degradation; proteasomal Pup-dependent pathway. With respect to regulation, the formation of the proteasomal ATPase ARC-20S proteasome complex, likely via the docking of the C-termini of ARC into the intersubunit pockets in the alpha-rings, may trigger opening of the gate for substrate entry. Interconversion between the open-gate and close-gate conformations leads to a dynamic regulation of the 20S proteasome proteolysis activity. In terms of biological role, component of the proteasome core, a large protease complex with broad specificity involved in protein degradation. The chain is Proteasome subunit alpha from Streptosporangium roseum (strain ATCC 12428 / DSM 43021 / JCM 3005 / KCTC 9067 / NCIMB 10171 / NRRL 2505 / NI 9100).